Here is a 445-residue protein sequence, read N- to C-terminus: C4-dicarboxylate transport protein (445 aa).

Transmembrane regions (helical) follow at residues 24-44 (VLYVQVLIAIVLGVLLGWVSP), 62-82 (LIKMVIAPIIFCTVVSGIAHI), 105-125 (FALILGLIVGNLVPVGHGLAA), 163-183 (GDILQVLLFAILFGFALMALG), 201-221 (FGVIAIVMKAAPVGAFGAMAF), 237-257 (LVALFYATAALFVFVVLGLIA), 322-342 (IYMTLATLFIAQALGIELTFT), and 370-390 (AGTLAAVNPALVPGMAIVFSI).

The protein belongs to the dicarboxylate/amino acid:cation symporter (DAACS) (TC 2.A.23) family.

It localises to the cell inner membrane. In terms of biological role, responsible for the transport of dicarboxylates such as succinate, fumarate, and malate from the periplasm across the membrane. The protein is C4-dicarboxylate transport protein of Rhodopseudomonas palustris (strain BisB5).